A 100-amino-acid chain; its full sequence is uncharacterized protein (100 aa).

Positions 1–23 are cleaved as a signal peptide; sequence MKYVALAFVLSLVILQISAQVGA.

In terms of tissue distribution, nacreous layer of shell (at protein level). Expressed primarily in the mantle with highest level in the mantle pallium and lower level in the mantle edge.

It localises to the secreted. This is an uncharacterized protein from Margaritifera margaritifera (Freshwater pearl mussel).